Here is a 335-residue protein sequence, read N- to C-terminus: Malate dehydrogenase 1 (335 aa).

NAD(+) contacts are provided by residues 11-16 (GAGNVG) and Asp-35. Substrate is bound by residues Arg-97 and Arg-103. NAD(+) is bound by residues Asn-110 and 133 to 135 (VTN). Substrate-binding residues include Asn-135 and Arg-166. The active-site Proton acceptor is His-190.

Belongs to the LDH/MDH superfamily. MDH type 3 family.

It catalyses the reaction (S)-malate + NAD(+) = oxaloacetate + NADH + H(+). Catalyzes the reversible oxidation of malate to oxaloacetate. This chain is Malate dehydrogenase 1 (mdh1), found in Aquifex aeolicus (strain VF5).